The primary structure comprises 189 residues: Ribosome maturation factor RimM (189 aa).

Residues 95 to 169 enclose the PRC barrel domain; the sequence is DEDEFFQTDL…IIKVEPHAAG (75 aa). Positions 168-189 are disordered; it reads AGLIADEHDNPPHESGKKPKKP. Residues 172–189 show a composition bias toward basic and acidic residues; the sequence is ADEHDNPPHESGKKPKKP.

Belongs to the RimM family. As to quaternary structure, binds ribosomal protein uS19.

The protein localises to the cytoplasm. An accessory protein needed during the final step in the assembly of 30S ribosomal subunit, possibly for assembly of the head region. Essential for efficient processing of 16S rRNA. May be needed both before and after RbfA during the maturation of 16S rRNA. It has affinity for free ribosomal 30S subunits but not for 70S ribosomes. This is Ribosome maturation factor RimM from Brucella abortus (strain S19).